The primary structure comprises 98 residues: NADH-ubiquinone oxidoreductase chain 4L (98 aa).

3 helical membrane passes run 1 to 21 (MPLIYMNIMLAFTISLLGMLV), 29 to 49 (SLLCLEGMMLSLFIMTTLMTL), and 58 to 78 (IVPITMLVFAACEAAVGLALL).

Belongs to the complex I subunit 4L family. In terms of assembly, core subunit of respiratory chain NADH dehydrogenase (Complex I) which is composed of 45 different subunits.

Its subcellular location is the mitochondrion inner membrane. It carries out the reaction a ubiquinone + NADH + 5 H(+)(in) = a ubiquinol + NAD(+) + 4 H(+)(out). In terms of biological role, core subunit of the mitochondrial membrane respiratory chain NADH dehydrogenase (Complex I) which catalyzes electron transfer from NADH through the respiratory chain, using ubiquinone as an electron acceptor. Part of the enzyme membrane arm which is embedded in the lipid bilayer and involved in proton translocation. This Pan paniscus (Pygmy chimpanzee) protein is NADH-ubiquinone oxidoreductase chain 4L (MT-ND4L).